Here is a 505-residue protein sequence, read N- to C-terminus: MFALRAASKADKNLLPFLGQLSRSHAAKAAKAAAAANGKIVAVIGAVVDVQFDDNLPPILNALEVDNRSPRLVLEVAQHLGENTVRTIAMDGTEGLVRGQKVLDTGYPIRIPVGAETLGRIINVIGEPIDERGPIDTDKTAAIHAEAPEFVQMSVEQEILVTGIKVVDLLAPYAKGGKIGLFGGAGVGKTVLIMELINNVAKAHGGYSVFAGVGERTREGNDLYNEMIEGGVISLKDKTSKVALVYGQMNEPPGARARVALTGLTVAEYFRDQEGQDVLLFIDNIFRFTQAGSEVSALLGRIPSAVGYQPTLATDMGSMQERITTTKKGSITSVQAIYVPADDLTDPAPATTFAHLDATTVLSRAIAELGIYPAVDPLDSTSRIMDPNIIGQEHYNVARGVQKILQDYKSLQDIIAILGMDELSEEDKLTVARARKIQRFLSQPFQVAEVFTGHAGKLVPLEQTIKGFSAILAGDYDHLPEVAFYMVGPIEEVVEKADRLAKEAA.

The transit peptide at Met1 to Lys31 directs the protein to the mitochondrion. An ATP-binding site is contributed by Gly183–Thr190.

This sequence belongs to the ATPase alpha/beta chains family. F-type ATPases have 2 components, CF(1) - the catalytic core - and CF(0) - the membrane proton channel. CF(1) has five subunits: alpha(3), beta(3), gamma(1), delta(1), epsilon(1). CF(0) has three main subunits: a, b and c.

The protein localises to the mitochondrion. The protein resides in the mitochondrion inner membrane. It carries out the reaction ATP + H2O + 4 H(+)(in) = ADP + phosphate + 5 H(+)(out). Mitochondrial membrane ATP synthase (F(1)F(0) ATP synthase or Complex V) produces ATP from ADP in the presence of a proton gradient across the membrane which is generated by electron transport complexes of the respiratory chain. F-type ATPases consist of two structural domains, F(1) - containing the extramembraneous catalytic core, and F(0) - containing the membrane proton channel, linked together by a central stalk and a peripheral stalk. During catalysis, ATP synthesis in the catalytic domain of F(1) is coupled via a rotary mechanism of the central stalk subunits to proton translocation. Subunits alpha and beta form the catalytic core in F(1). Rotation of the central stalk against the surrounding alpha(3)beta(3) subunits leads to hydrolysis of ATP in three separate catalytic sites on the beta subunits. The protein is ATP synthase subunit beta, mitochondrial of Drosophila melanogaster (Fruit fly).